The primary structure comprises 393 residues: Probable protein phosphatase 2C 72 (393 aa).

Residues 49–357 (EFSMAVVQAN…DDITVVVVFF (309 aa)) form the PPM-type phosphatase domain. Mn(2+) is bound by residues aspartate 88 and glycine 89. Residues 147 to 167 (LAAVGSCCLVGVICAGNLYIA) traverse the membrane as a helical segment. 2 residues coordinate Mn(2+): aspartate 289 and aspartate 348.

It belongs to the PP2C family. Requires Mg(2+) as cofactor. The cofactor is Mn(2+).

The protein resides in the membrane. The enzyme catalyses O-phospho-L-seryl-[protein] + H2O = L-seryl-[protein] + phosphate. The catalysed reaction is O-phospho-L-threonyl-[protein] + H2O = L-threonyl-[protein] + phosphate. The polypeptide is Probable protein phosphatase 2C 72 (Oryza sativa subsp. japonica (Rice)).